The chain runs to 322 residues: Protein farnesyltransferase/geranylgeranyltransferase type-1 subunit alpha (322 aa).

The disordered stretch occupies residues Met-1–Gln-27. PFTA repeat units follow at residues Arg-62 to Glu-95, Gln-103 to Asp-136, Lys-138 to Asn-171, Glu-173 to Pro-205, Arg-213 to Thr-246, and Asn-287 to Ile-321.

This sequence belongs to the protein prenyltransferase subunit alpha family. Heterodimer of fntA and fntB (farnesyltransferase). Heterodimer of an alpha and a beta subunit. Requires Mg(2+) as cofactor.

It carries out the reaction L-cysteinyl-[protein] + (2E,6E)-farnesyl diphosphate = S-(2E,6E)-farnesyl-L-cysteinyl-[protein] + diphosphate. It catalyses the reaction geranylgeranyl diphosphate + L-cysteinyl-[protein] = S-geranylgeranyl-L-cysteinyl-[protein] + diphosphate. In terms of biological role, catalyzes the transfer of a farnesyl or geranyl-geranyl moiety from farnesyl or geranyl-geranyl diphosphate to a cysteine at the fourth position from the C-terminus of several proteins having the C-terminal sequence Cys-aliphatic-aliphatic-X. The alpha subunit is thought to participate in a stable complex with the substrate. The beta subunit binds the peptide substrate. The chain is Protein farnesyltransferase/geranylgeranyltransferase type-1 subunit alpha (fntA) from Dictyostelium discoideum (Social amoeba).